The following is a 434-amino-acid chain: MTNSNEAQENALSPERQAERDEVLAKAKKAKEVSSQLLLNTQQKNDLLADAADALEANAADIIAANEKDIATGKERGFADSLLDRLALDTERISGIAGGLRQVIGLSDPVGEIVRGHTRPNGLRMKQVRVPLGVMGMVYEARPNVTVDAFGLAIKSGNVPLLRGSKSARHTNEKLVQILQDVAESHNLPRELVQLLPCDTHDSVQDLITARGLVDLVIPRGGAGLINAVVLGATVPTIETGTGNCHFYIDSSADIEEATKLVINGKTRRCSVCNATEVVLLDSALPDPDKIYVLQELQKAGVTLHGEKKQLDPLINDVVQAEETDWTDEYLSFDIAVAIVDGVEEAVAHINRYGTSHTEGIAARDYKTTSYFEQYVDAAAVSINTSTAWTDGEMFGFGAEIGISTQKLHARGPMGLPELTSTKWVINGEGQVRP.

The segment covering 1 to 11 (MTNSNEAQENA) has biased composition (polar residues). The disordered stretch occupies residues 1–26 (MTNSNEAQENALSPERQAERDEVLAK). The span at 16–25 (RQAERDEVLA) shows a compositional bias: basic and acidic residues.

The protein belongs to the gamma-glutamyl phosphate reductase family.

Its subcellular location is the cytoplasm. The catalysed reaction is L-glutamate 5-semialdehyde + phosphate + NADP(+) = L-glutamyl 5-phosphate + NADPH + H(+). It participates in amino-acid biosynthesis; L-proline biosynthesis; L-glutamate 5-semialdehyde from L-glutamate: step 2/2. Catalyzes the NADPH-dependent reduction of L-glutamate 5-phosphate into L-glutamate 5-semialdehyde and phosphate. The product spontaneously undergoes cyclization to form 1-pyrroline-5-carboxylate. The sequence is that of Gamma-glutamyl phosphate reductase from Corynebacterium jeikeium (strain K411).